The following is a 948-amino-acid chain: Protein translocase subunit SecA (948 aa).

ATP contacts are provided by residues Gln91, 109-113 (GEGKT), and Asp509.

The protein belongs to the SecA family. Monomer and homodimer. Part of the essential Sec protein translocation apparatus which comprises SecA, SecYEG and auxiliary proteins SecDF. Other proteins may also be involved.

It localises to the cell inner membrane. Its subcellular location is the cellular thylakoid membrane. It is found in the cytoplasm. The enzyme catalyses ATP + H2O + cellular proteinSide 1 = ADP + phosphate + cellular proteinSide 2.. Functionally, part of the Sec protein translocase complex. Interacts with the SecYEG preprotein conducting channel. Has a central role in coupling the hydrolysis of ATP to the transfer of proteins into and across the cell membrane, serving as an ATP-driven molecular motor driving the stepwise translocation of polypeptide chains across the membrane. Its function is as follows. Probably participates in protein translocation into and across both the cytoplasmic and thylakoid membranes in cyanobacterial cells. This Synechococcus elongatus (strain ATCC 33912 / PCC 7942 / FACHB-805) (Anacystis nidulans R2) protein is Protein translocase subunit SecA.